Reading from the N-terminus, the 497-residue chain is MSLQKHGLLFNNNKFSDCKLVLDDGNVQVTLNVHKCLLYMNSLYFQAMFDNFKEQEYSEIKIRVQNSQIATDVIKSFYEKSNVINADWQYQLDYAIETKFFGVEYVLDKNIIVPYIYFDLFVDKIELIGYNNTTLNMILNNLPLDYDLDKFPTDFLEGLLVSSTEYDIFLSNKHCFYVWSVTDNKFTYSKEIPLELYYSYLDNDKIYKFTEHNSLICFNKKTDRHKSILLYDNDKIIKFDTEGVIYYLPENNQIILSHVERTTTGCDYKISLFCLETKQLIRTFHSRNYFGNEIILQISVSHDKIIVFGDDVQVKNFSSGVCLFTINQNESGVCIACDPEWSYFAIGSEDYDTEDQKITIYDLSNGNKVKTLNHRDSIRDILWTSKYIIAHNNENIYFYETNNYELVKKLDYKNNGLIKKIDCFDDSEFLYVLTNNSKMFQINMDSLENTDSNNISTEICFTQIGRFCDFKTIKNSNYHKSKLIKKTLEQRRRMDKN.

A BTB domain is found at Ser16–Ala86.

Belongs to the mimivirus BTB/WD family.

The chain is Putative BTB/POZ domain-containing protein R738 from Acanthamoeba polyphaga (Amoeba).